Here is a 934-residue protein sequence, read N- to C-terminus: Sorting nexin-14 (934 aa).

The next 2 helical transmembrane spans lie at 27–47 (YPVI…LNQY) and 48–68 (LHIL…YCSL). The PXA domain maps to 129-303 (PSKVDASISE…MVLIFIDDSP (175 aa)). An RGS domain is found at 335–467 (DLKEIREQQD…CHSDEYFRHL (133 aa)). In terms of domain architecture, PX spans 557 to 677 (WTISIPYVDF…DFLSPFSMES (121 aa)).

Belongs to the sorting nexin family.

The protein localises to the lysosome membrane. It localises to the late endosome membrane. The protein resides in the cell projection. It is found in the dendrite. Functionally, plays a role in maintaining normal neuronal excitability and synaptic transmission. May be involved in several stages of intracellular trafficking. Required for autophagosome clearance, possibly by mediating the fusion of lysosomes with autophagosomes. Binds phosphatidylinositol 3,5-bisphosphate (PtdIns(3,5)P2), a key component of late endosomes/lysosomes. Does not bind phosphatidylinositol 3-phosphate (PtdIns(3P)). The protein is Sorting nexin-14 of Danio rerio (Zebrafish).